The following is a 147-amino-acid chain: Small ribosomal subunit protein bS6 (147 aa).

The interval valine 96–glutamate 147 is disordered. A compositionally biased stretch (basic and acidic residues) spans lysine 104 to glutamate 147.

It belongs to the bacterial ribosomal protein bS6 family.

Its function is as follows. Binds together with bS18 to 16S ribosomal RNA. The chain is Small ribosomal subunit protein bS6 from Photobacterium profundum (strain SS9).